A 214-amino-acid chain; its full sequence is High frequency lysogenization protein HflD homolog (214 aa).

Belongs to the HflD family.

The protein localises to the cytoplasm. It is found in the cell inner membrane. In Chromohalobacter salexigens (strain ATCC BAA-138 / DSM 3043 / CIP 106854 / NCIMB 13768 / 1H11), this protein is High frequency lysogenization protein HflD homolog.